Consider the following 889-residue polypeptide: Translation initiation factor IF-2 (889 aa).

2 disordered regions span residues 47 to 85 (GHLK…AKSV) and 206 to 302 (AEAA…FTKP). Basic and acidic residues-rich tracts occupy residues 52-61 (QHGDESEAKP), 214-241 (AAKK…KEVV), and 252-263 (AEDKSDSADESG). In terms of domain architecture, tr-type G spans 389 to 558 (TRAPVVTIMG…LLQSEVLELT (170 aa)). The G1 stretch occupies residues 398-405 (GHVDHGKT). 398–405 (GHVDHGKT) lines the GTP pocket. Residues 423 to 427 (GITQH) are G2. The G3 stretch occupies residues 444 to 447 (DTPG). GTP-binding positions include 444-448 (DTPGH) and 498-501 (NKMD). The interval 498 to 501 (NKMD) is G4. The segment at 534-536 (SAK) is G5.

This sequence belongs to the TRAFAC class translation factor GTPase superfamily. Classic translation factor GTPase family. IF-2 subfamily.

It is found in the cytoplasm. Its function is as follows. One of the essential components for the initiation of protein synthesis. Protects formylmethionyl-tRNA from spontaneous hydrolysis and promotes its binding to the 30S ribosomal subunits. Also involved in the hydrolysis of GTP during the formation of the 70S ribosomal complex. The sequence is that of Translation initiation factor IF-2 from Colwellia psychrerythraea (strain 34H / ATCC BAA-681) (Vibrio psychroerythus).